Reading from the N-terminus, the 112-residue chain is Putative galactitol utilization operon repressor (112 aa).

Positions 5–60 (SFERRNKIIQLVNEQGTVLVQDLAGVFAASEATIRADLRFLEQKGVVTRFHGGAAK) constitute an HTH deoR-type domain. The H-T-H motif DNA-binding region spans 22 to 41 (VLVQDLAGVFAASEATIRAD).

In terms of biological role, repressor of the gat operon for galacticol transport and metabolism. In K12 strains the operon is constitutively expressed because this gene is inactive. This is Putative galactitol utilization operon repressor (gatR) from Escherichia coli (strain K12).